The following is an 89-amino-acid chain: Small ribosomal subunit protein uS15 (89 aa).

The protein belongs to the universal ribosomal protein uS15 family. In terms of assembly, part of the 30S ribosomal subunit. Forms a bridge to the 50S subunit in the 70S ribosome, contacting the 23S rRNA.

One of the primary rRNA binding proteins, it binds directly to 16S rRNA where it helps nucleate assembly of the platform of the 30S subunit by binding and bridging several RNA helices of the 16S rRNA. In terms of biological role, forms an intersubunit bridge (bridge B4) with the 23S rRNA of the 50S subunit in the ribosome. This Mycobacterium marinum (strain ATCC BAA-535 / M) protein is Small ribosomal subunit protein uS15.